We begin with the raw amino-acid sequence, 476 residues long: Glycogen synthase (476 aa).

Lys15 lines the ADP-alpha-D-glucose pocket.

The protein belongs to the glycosyltransferase 1 family. Bacterial/plant glycogen synthase subfamily.

The enzyme catalyses [(1-&gt;4)-alpha-D-glucosyl](n) + ADP-alpha-D-glucose = [(1-&gt;4)-alpha-D-glucosyl](n+1) + ADP + H(+). The protein operates within glycan biosynthesis; glycogen biosynthesis. In terms of biological role, synthesizes alpha-1,4-glucan chains using ADP-glucose. In Bacillus cereus (strain Q1), this protein is Glycogen synthase.